The sequence spans 141 residues: Large ribosomal subunit protein uL11 (141 aa).

Belongs to the universal ribosomal protein uL11 family. Part of the ribosomal stalk of the 50S ribosomal subunit. Interacts with L10 and the large rRNA to form the base of the stalk. L10 forms an elongated spine to which L12 dimers bind in a sequential fashion forming a multimeric L10(L12)X complex. In terms of processing, one or more lysine residues are methylated.

Forms part of the ribosomal stalk which helps the ribosome interact with GTP-bound translation factors. The protein is Large ribosomal subunit protein uL11 of Parasynechococcus marenigrum (strain WH8102).